The primary structure comprises 254 residues: 5'/3'-nucleotidase SurE (254 aa).

Residues Asp9, Asp10, Ser40, and Asn93 each contribute to the a divalent metal cation site.

The protein belongs to the SurE nucleotidase family. The cofactor is a divalent metal cation.

The protein localises to the cytoplasm. The catalysed reaction is a ribonucleoside 5'-phosphate + H2O = a ribonucleoside + phosphate. It catalyses the reaction a ribonucleoside 3'-phosphate + H2O = a ribonucleoside + phosphate. It carries out the reaction [phosphate](n) + H2O = [phosphate](n-1) + phosphate + H(+). Nucleotidase with a broad substrate specificity as it can dephosphorylate various ribo- and deoxyribonucleoside 5'-monophosphates and ribonucleoside 3'-monophosphates with highest affinity to 3'-AMP. Also hydrolyzes polyphosphate (exopolyphosphatase activity) with the preference for short-chain-length substrates (P20-25). Might be involved in the regulation of dNTP and NTP pools, and in the turnover of 3'-mononucleotides produced by numerous intracellular RNases (T1, T2, and F) during the degradation of various RNAs. This Yersinia pestis bv. Antiqua (strain Antiqua) protein is 5'/3'-nucleotidase SurE.